Consider the following 570-residue polypeptide: Sulfite reductase [NADPH] hemoprotein beta-component (570 aa).

[4Fe-4S] cluster contacts are provided by cysteine 434, cysteine 440, cysteine 479, and cysteine 483. Position 483 (cysteine 483) interacts with siroheme.

Belongs to the nitrite and sulfite reductase 4Fe-4S domain family. In terms of assembly, alpha(8)-beta(8). The alpha component is a flavoprotein, the beta component is a hemoprotein. Siroheme is required as a cofactor. The cofactor is [4Fe-4S] cluster.

The catalysed reaction is hydrogen sulfide + 3 NADP(+) + 3 H2O = sulfite + 3 NADPH + 4 H(+). It participates in sulfur metabolism; hydrogen sulfide biosynthesis; hydrogen sulfide from sulfite (NADPH route): step 1/1. Functionally, component of the sulfite reductase complex that catalyzes the 6-electron reduction of sulfite to sulfide. This is one of several activities required for the biosynthesis of L-cysteine from sulfate. In Escherichia coli O17:K52:H18 (strain UMN026 / ExPEC), this protein is Sulfite reductase [NADPH] hemoprotein beta-component.